A 181-amino-acid polypeptide reads, in one-letter code: PLAT domain-containing protein 1 (181 aa).

A signal peptide spans 1–14 (MARRDVLLPFLLLL). At alanine 15 the chain carries N-acetylalanine. One can recognise a PLAT domain in the interval 29–156 (CVYTFYLRTG…SPYELTAVRN (128 aa)).

Expressed in root tips, pericycle cells, lateral root primordia, stomata, leaf vasculature, hydathodes and floral organs.

The protein localises to the endoplasmic reticulum. The protein resides in the plastid. Its subcellular location is the chloroplast. It is found in the plastoglobule. Positive regulator of abiotic stress tolerance involved in the regulation of plant growth. May be a downstream target of the abscisic acid (ABA) signaling pathway. In Arabidopsis thaliana (Mouse-ear cress), this protein is PLAT domain-containing protein 1.